Reading from the N-terminus, the 537-residue chain is Cytochrome P450 monooxygenase yanC (537 aa).

An N-terminal signal peptide occupies residues 1-21 (MALVHLTALAACGLLLVILRA). C449 serves as a coordination point for heme.

The protein belongs to the cytochrome P450 family. Heme serves as cofactor.

Its pathway is secondary metabolite biosynthesis; terpenoid biosynthesis. Functionally, cytochrome P450 monooxygenase; part of the gene cluster that mediates the biosynthesis of yanuthone D, a fungal isoprenoid epoxycyclohexenone that acts as an antibiotic against fungi and bacteria. The first step of the pathway is the synthesis of 6-methylsalicylic acid (6-MSA) by the polyketide synthase yanA. 6-MSA is then converted to m-cresol by the decarboxylase yanB. The cytochrome P450 monooxygenase yanC then catalyzes the oxidation of m-cresol to toluquinol. Epoxidation of toluquinol is then performed by the short chain dehydrogenase yanD, with the help of yanE, and a further prenylation by yanG leads to 7-deacetoxyyanuthone A. The next step is the hydroxylation of C-22 of 7-deacetoxyyanuthone A by the cytochrome P450 monooxygenase yanH to yield 22-deacetylyanuthone A. O-Mevalon transferase yanI then attaches mevalon to the hydroxyl group of 22-deacetylyanuthone A to produce yanuthone E. Finally, the FAD-dependent monooxygenase yanF oxidizes the hydroxyl group at C15 of yanuthone E to form yanuthone D. Furthermore, several branching points in the pathway lead to the production of yanuthones F and G from 7-deacetoxyyanuthone A; yanuthones H and I from 22-deacetylyanuthone A; and yanuthone J from yanuthone E. YanC is also involved in the synthesis of yanuthone X1 which does not have 6-methylsalicylic acid (6-MSA) as precursor. In Aspergillus niger (strain ATCC 1015 / CBS 113.46 / FGSC A1144 / LSHB Ac4 / NCTC 3858a / NRRL 328 / USDA 3528.7), this protein is Cytochrome P450 monooxygenase yanC.